We begin with the raw amino-acid sequence, 661 residues long: Fructose-1,6-bisphosphatase class 3 (661 aa).

The protein belongs to the FBPase class 3 family. Requires Mn(2+) as cofactor.

It catalyses the reaction beta-D-fructose 1,6-bisphosphate + H2O = beta-D-fructose 6-phosphate + phosphate. It functions in the pathway carbohydrate biosynthesis; gluconeogenesis. This is Fructose-1,6-bisphosphatase class 3 from Clostridioides difficile (strain 630) (Peptoclostridium difficile).